A 549-amino-acid chain; its full sequence is Glucose-6-phosphate isomerase (549 aa).

The Proton donor role is filled by Glu-355. Active-site residues include His-386 and Lys-514.

This sequence belongs to the GPI family.

It localises to the cytoplasm. The enzyme catalyses alpha-D-glucose 6-phosphate = beta-D-fructose 6-phosphate. It functions in the pathway carbohydrate biosynthesis; gluconeogenesis. The protein operates within carbohydrate degradation; glycolysis; D-glyceraldehyde 3-phosphate and glycerone phosphate from D-glucose: step 2/4. Its function is as follows. Catalyzes the reversible isomerization of glucose-6-phosphate to fructose-6-phosphate. This chain is Glucose-6-phosphate isomerase, found in Klebsiella pneumoniae (strain 342).